Consider the following 586-residue polypeptide: uncharacterized protein (586 aa).

2 disordered regions span residues 17–64 (VRRT…ETEE) and 80–123 (HSCS…GGAN). Positions 28–37 (PSTSGSIAWT) are enriched in polar residues. Low complexity-rich tracts occupy residues 38–52 (SSES…VSSS) and 80–91 (HSCSAATTSQQS). Residues 94-110 (QSKEHRIGGIKKEEKPI) show a composition bias toward basic and acidic residues. Residues 112-123 (MGGGSSENGGAN) show a composition bias toward gly residues. The next 12 helical transmembrane spans lie at 151 to 171 (WVIL…WIQY), 191 to 211 (WTSM…AWLL), 218 to 238 (LSVL…LLST), 243 to 263 (FWVT…TLGI), 283 to 303 (LGVF…PLIV), 317 to 337 (TLFL…ICFF), 375 to 395 (FVIL…ISTL), 413 to 433 (YVGL…GFIL), 441 to 461 (LTTI…TLTI), 466 to 486 (MVLV…YLPI), 513 to 533 (IFGI…GTFT), and 536 to 556 (IIMS…REDL).

This sequence belongs to the major facilitator superfamily. Feline leukemia virus subgroup C receptor (TC 2.A.1.28.1) family.

Its subcellular location is the membrane. This is an uncharacterized protein from Caenorhabditis elegans.